We begin with the raw amino-acid sequence, 303 residues long: Protease HtpX homolog (303 aa).

2 consecutive transmembrane segments (helical) span residues 19–39 and 41–61; these read IIIFVISILLFLVCYAIVSYF and LGEFGILVAFLMVFFVNYYAY. His-146 is a binding site for Zn(2+). Glu-147 is an active-site residue. A Zn(2+)-binding site is contributed by His-150. A run of 2 helical transmembrane segments spans residues 156 to 176 and 192 to 212; these read VRLQTVAAVMVGLIVILGDSL and NILGIVSLVIAILAPFLATLL. Glu-221 provides a ligand contact to Zn(2+).

This sequence belongs to the peptidase M48B family. The cofactor is Zn(2+).

Its subcellular location is the cell inner membrane. The protein is Protease HtpX homolog of Dictyoglomus thermophilum (strain ATCC 35947 / DSM 3960 / H-6-12).